Here is a 446-residue protein sequence, read N- to C-terminus: Adenylosuccinate synthetase (446 aa).

GTP contacts are provided by residues 20–26 and 48–50; these read GDEGKGK and GHT. Residue Asp21 is the Proton acceptor of the active site. Asp21 and Gly48 together coordinate Mg(2+). Residues 21-24, 46-49, Thr137, Arg151, Gln232, Thr247, and Arg319 each bind IMP; these read DEGK and NAGH. Residue His49 is the Proton donor of the active site. 315-321 provides a ligand contact to substrate; it reads SVTGRPR. GTP-binding positions include Arg321, 347-349, and 429-431; these read KLD and STG.

Belongs to the adenylosuccinate synthetase family. As to quaternary structure, homodimer. Requires Mg(2+) as cofactor.

Its subcellular location is the cytoplasm. It catalyses the reaction IMP + L-aspartate + GTP = N(6)-(1,2-dicarboxyethyl)-AMP + GDP + phosphate + 2 H(+). It participates in purine metabolism; AMP biosynthesis via de novo pathway; AMP from IMP: step 1/2. Functionally, plays an important role in the de novo pathway of purine nucleotide biosynthesis. Catalyzes the first committed step in the biosynthesis of AMP from IMP. In Ralstonia pickettii (strain 12J), this protein is Adenylosuccinate synthetase.